The sequence spans 152 residues: MFRGAQAINLDTKGRIAIPTRYRPELLAENQGQLICTVDIRQPCLLLYPLKEWEIIEQKLCQLANFDPAQRSVQRVMSGYATECELDSAGRILLSAPLRQRAKLEKTIMLVGQLNKFEIWSETEWQAQIERDLELGLSGELATSDALKMLSL.

2 consecutive SpoVT-AbrB domains span residues 5-52 and 81-124; these read AQAI…PLKE and ATEC…SETE.

This sequence belongs to the MraZ family. In terms of assembly, forms oligomers.

The protein localises to the cytoplasm. Its subcellular location is the nucleoid. The polypeptide is Transcriptional regulator MraZ (Mannheimia succiniciproducens (strain KCTC 0769BP / MBEL55E)).